The primary structure comprises 65 residues: Large ribosomal subunit protein bL28 (65 aa).

Belongs to the bacterial ribosomal protein bL28 family.

The protein is Large ribosomal subunit protein bL28 of Pseudothermotoga lettingae (strain ATCC BAA-301 / DSM 14385 / NBRC 107922 / TMO) (Thermotoga lettingae).